A 285-amino-acid chain; its full sequence is Tryptophan synthase alpha chain (285 aa).

Catalysis depends on proton acceptor residues E53 and D64.

The protein belongs to the TrpA family. As to quaternary structure, tetramer of two alpha and two beta chains.

It carries out the reaction (1S,2R)-1-C-(indol-3-yl)glycerol 3-phosphate + L-serine = D-glyceraldehyde 3-phosphate + L-tryptophan + H2O. Its pathway is amino-acid biosynthesis; L-tryptophan biosynthesis; L-tryptophan from chorismate: step 5/5. In terms of biological role, the alpha subunit is responsible for the aldol cleavage of indoleglycerol phosphate to indole and glyceraldehyde 3-phosphate. The polypeptide is Tryptophan synthase alpha chain (Bordetella parapertussis (strain 12822 / ATCC BAA-587 / NCTC 13253)).